A 95-amino-acid chain; its full sequence is Large ribosomal subunit protein uL23 (95 aa).

The protein belongs to the universal ribosomal protein uL23 family. As to quaternary structure, part of the 50S ribosomal subunit. Contacts protein L29, and trigger factor when it is bound to the ribosome.

Its function is as follows. One of the early assembly proteins it binds 23S rRNA. One of the proteins that surrounds the polypeptide exit tunnel on the outside of the ribosome. Forms the main docking site for trigger factor binding to the ribosome. In Pelotomaculum thermopropionicum (strain DSM 13744 / JCM 10971 / SI), this protein is Large ribosomal subunit protein uL23.